The sequence spans 89 residues: Small ribosomal subunit protein uS15 (89 aa).

The protein belongs to the universal ribosomal protein uS15 family. Part of the 30S ribosomal subunit. Forms a bridge to the 50S subunit in the 70S ribosome, contacting the 23S rRNA.

Its function is as follows. One of the primary rRNA binding proteins, it binds directly to 16S rRNA where it helps nucleate assembly of the platform of the 30S subunit by binding and bridging several RNA helices of the 16S rRNA. Forms an intersubunit bridge (bridge B4) with the 23S rRNA of the 50S subunit in the ribosome. In Pediococcus pentosaceus (strain ATCC 25745 / CCUG 21536 / LMG 10740 / 183-1w), this protein is Small ribosomal subunit protein uS15.